The following is an 82-amino-acid chain: Small ribosomal subunit protein bS16 (82 aa).

It belongs to the bacterial ribosomal protein bS16 family.

The protein is Small ribosomal subunit protein bS16 of Enterobacter sp. (strain 638).